We begin with the raw amino-acid sequence, 244 residues long: Krueppel-like factor 9 (244 aa).

2 disordered regions span residues 26 to 51 and 79 to 143; these read EHGG…GDPG and PSVC…EKRH. Positions 32-51 are enriched in basic and acidic residues; it reads EAERLRLPEREVTKEHGDPG. Position 122 is a phosphoserine (serine 122). The segment covering 134–143 has biased composition (basic residues); sequence KGKHASEKRH. 3 consecutive C2H2-type zinc fingers follow at residues 143 to 167, 173 to 197, and 203 to 225; these read HKCP…YRVH, FPCT…YRTH, and FRCP…ARRH.

It belongs to the Sp1 C2H2-type zinc-finger protein family. As to quaternary structure, interacts with ZZEF1.

The protein resides in the nucleus. Functionally, transcription factor that binds to GC box promoter elements. Selectively activates mRNA synthesis from genes containing tandem repeats of GC boxes but represses genes with a single GC box. Acts as an epidermal circadian transcription factor regulating keratinocyte proliferation. This Mus musculus (Mouse) protein is Krueppel-like factor 9 (Klf9).